The following is a 635-amino-acid chain: Biosynthetic arginine decarboxylase (635 aa).

Lysine 100 carries the post-translational modification N6-(pyridoxal phosphate)lysine. 282–292 (LDIGGGLGVDY) provides a ligand contact to substrate.

It belongs to the Orn/Lys/Arg decarboxylase class-II family. SpeA subfamily. Mg(2+) is required as a cofactor. It depends on pyridoxal 5'-phosphate as a cofactor.

The enzyme catalyses L-arginine + H(+) = agmatine + CO2. It participates in amine and polyamine biosynthesis; agmatine biosynthesis; agmatine from L-arginine: step 1/1. Functionally, catalyzes the biosynthesis of agmatine from arginine. This is Biosynthetic arginine decarboxylase from Geotalea uraniireducens (strain Rf4) (Geobacter uraniireducens).